Here is a 1887-residue protein sequence, read N- to C-terminus: Protein TIC 214 (1887 aa).

6 helical membrane passes run 18-38, 64-84, 87-107, 124-144, 172-192, and 221-241; these read IINSVVVVGLYYGFLTTFSIG, FITGQLMMFISIYYAPLHLAL, PHTITVLALPYLLFHFFWNNH, LSIQCVFLNNLIFQLFNHFIL, VGWLIGHILFMKWLGLVLVWI, and IFSILLFITCVYYLGRIPSPI. Disordered regions lie at residues 248–300, 785–805, and 1569–1603; these read EASK…EGWD, REEQTKREEKKEKDKKEDNKR, and LPSNKKIKNRSQETKEPPSQRERGSDIENKGNLSP. Acidic residues predominate over residues 256–268; the sequence is VESEEERDVEIET. Over residues 1578–1597 the composition is skewed to basic and acidic residues; it reads RSQETKEPPSQRERGSDIEN.

The protein belongs to the TIC214 family. Part of the Tic complex.

The protein localises to the plastid. The protein resides in the chloroplast inner membrane. Its function is as follows. Involved in protein precursor import into chloroplasts. May be part of an intermediate translocation complex acting as a protein-conducting channel at the inner envelope. The chain is Protein TIC 214 from Solanum tuberosum (Potato).